The sequence spans 322 residues: Beta-carotene 3-hydroxylase, chloroplastic (322 aa).

Residues 1 to 68 (TFHKPVSGAS…AQRCSLVRLR (68 aa)) constitute a chloroplast transit peptide. 2 helical membrane-spanning segments follow: residues 118–138 (QAAA…ATYL) and 149–169 (AVPW…ALGM). The Fatty acid hydroxylase domain maps to 164 to 286 (GGALGMEMYA…AHQLHHSGKY (123 aa)). The short motif at 177-182 (HKAIWH) is the Histidine box-1 element. The Histidine box-2 signature appears at 191–195 (HKSHH). Transmembrane regions (helical) follow at residues 207-227 (LFAI…FWLP) and 231-251 (GAAC…YMFV). The Histidine box-3 signature appears at 252–257 (HDGLVH). The short motif at 278-282 (HQLHH) is the Histidine box-4 element.

Belongs to the sterol desaturase family.

Its subcellular location is the plastid. The protein resides in the chloroplast membrane. The catalysed reaction is all-trans-beta-carotene + 4 reduced [2Fe-2S]-[ferredoxin] + 2 O2 + 4 H(+) = all-trans-zeaxanthin + 4 oxidized [2Fe-2S]-[ferredoxin] + 2 H2O. Nonheme diiron monooxygenase involved in the biosynthesis of astaxanthin. Hydroxylates beta-ring of beta-carotene and catalyzes the conversion of canthaxanthin to astaxanthin. Uses ferredoxin as an electron donor. This is Beta-carotene 3-hydroxylase, chloroplastic (CRTZ) from Haematococcus lacustris (Green alga).